We begin with the raw amino-acid sequence, 115 residues long: NAD(P)H-quinone oxidoreductase subunit M (115 aa).

This sequence belongs to the complex I NdhM subunit family. As to quaternary structure, NDH-1 can be composed of about 15 different subunits; different subcomplexes with different compositions have been identified which probably have different functions.

The protein resides in the cellular thylakoid membrane. It catalyses the reaction a plastoquinone + NADH + (n+1) H(+)(in) = a plastoquinol + NAD(+) + n H(+)(out). It carries out the reaction a plastoquinone + NADPH + (n+1) H(+)(in) = a plastoquinol + NADP(+) + n H(+)(out). Its function is as follows. NDH-1 shuttles electrons from an unknown electron donor, via FMN and iron-sulfur (Fe-S) centers, to quinones in the respiratory and/or the photosynthetic chain. The immediate electron acceptor for the enzyme in this species is believed to be plastoquinone. Couples the redox reaction to proton translocation, and thus conserves the redox energy in a proton gradient. Cyanobacterial NDH-1 also plays a role in inorganic carbon-concentration. The sequence is that of NAD(P)H-quinone oxidoreductase subunit M from Prochlorococcus marinus (strain NATL2A).